The chain runs to 437 residues: Epsilon-sarcoglycan (437 aa).

The Extracellular portion of the chain corresponds to 1-317; that stretch reads MLLFWWWELG…LKSRDYYTDF (317 aa). N200 carries an N-linked (GlcNAc...) asparagine glycan. A helical transmembrane segment spans residues 318–338; it reads LVTLAVPSAVALVLFLILAYI. Topologically, residues 339-437 are cytoplasmic; sequence MCCRREGVEK…QQQTTGKWYP (99 aa).

It belongs to the sarcoglycan alpha/epsilon family. N-glycosylated. Post-translationally, ubiquitinated, leading to its degradation by the proteasome. In both neural tissues including cerebellar cortex, striatum, cerebral cortex, thalamus and hippocampus, and non-neural tissues including quadriceps muscle, liver, kidney, spleen, lung, testis and heart. Widely distributed in the brain, with a robust signal obtained from regions with dense neuronal packing such as the pyramidal cell layer of the hippocampus, cerebellar molecular layer, and cerebral cortex. Levels are highest in kidney, moderate in brain and lung, and low in skeletal muscle, liver, spleen and testis.

It localises to the cell membrane. It is found in the sarcolemma. The protein resides in the cytoplasm. The protein localises to the cytoskeleton. Its subcellular location is the cell projection. It localises to the dendrite. It is found in the golgi apparatus. Functionally, component of the sarcoglycan complex, a subcomplex of the dystrophin-glycoprotein complex which forms a link between the F-actin cytoskeleton and the extracellular matrix. The polypeptide is Epsilon-sarcoglycan (Rattus norvegicus (Rat)).